The following is a 160-amino-acid chain: NAD(P)H-quinone oxidoreductase subunit I, chloroplastic (160 aa).

2 4Fe-4S ferredoxin-type domains span residues 55–84 (GRIH…VDWK) and 95–124 (LNYS…MTEE). 8 residues coordinate [4Fe-4S] cluster: Cys64, Cys67, Cys70, Cys74, Cys104, Cys107, Cys110, and Cys114.

It belongs to the complex I 23 kDa subunit family. In terms of assembly, NDH is composed of at least 16 different subunits, 5 of which are encoded in the nucleus. [4Fe-4S] cluster is required as a cofactor.

The protein localises to the plastid. It localises to the chloroplast thylakoid membrane. It catalyses the reaction a plastoquinone + NADH + (n+1) H(+)(in) = a plastoquinol + NAD(+) + n H(+)(out). The catalysed reaction is a plastoquinone + NADPH + (n+1) H(+)(in) = a plastoquinol + NADP(+) + n H(+)(out). Functionally, NDH shuttles electrons from NAD(P)H:plastoquinone, via FMN and iron-sulfur (Fe-S) centers, to quinones in the photosynthetic chain and possibly in a chloroplast respiratory chain. The immediate electron acceptor for the enzyme in this species is believed to be plastoquinone. Couples the redox reaction to proton translocation, and thus conserves the redox energy in a proton gradient. The chain is NAD(P)H-quinone oxidoreductase subunit I, chloroplastic from Cucumis sativus (Cucumber).